We begin with the raw amino-acid sequence, 158 residues long: Crossover junction endodeoxyribonuclease RuvC (158 aa).

Active-site residues include Asp-7, Glu-66, and Asp-139. Mg(2+)-binding residues include Asp-7, Glu-66, and Asp-139.

It belongs to the RuvC family. In terms of assembly, homodimer which binds Holliday junction (HJ) DNA. The HJ becomes 2-fold symmetrical on binding to RuvC with unstacked arms; it has a different conformation from HJ DNA in complex with RuvA. In the full resolvosome a probable DNA-RuvA(4)-RuvB(12)-RuvC(2) complex forms which resolves the HJ. Requires Mg(2+) as cofactor.

Its subcellular location is the cytoplasm. It carries out the reaction Endonucleolytic cleavage at a junction such as a reciprocal single-stranded crossover between two homologous DNA duplexes (Holliday junction).. The RuvA-RuvB-RuvC complex processes Holliday junction (HJ) DNA during genetic recombination and DNA repair. Endonuclease that resolves HJ intermediates. Cleaves cruciform DNA by making single-stranded nicks across the HJ at symmetrical positions within the homologous arms, yielding a 5'-phosphate and a 3'-hydroxyl group; requires a central core of homology in the junction. The consensus cleavage sequence is 5'-(A/T)TT(C/G)-3'. Cleavage occurs on the 3'-side of the TT dinucleotide at the point of strand exchange. HJ branch migration catalyzed by RuvA-RuvB allows RuvC to scan DNA until it finds its consensus sequence, where it cleaves and resolves the cruciform DNA. In Campylobacter lari (strain RM2100 / D67 / ATCC BAA-1060), this protein is Crossover junction endodeoxyribonuclease RuvC.